The following is a 335-amino-acid chain: ATP-dependent 6-phosphofructokinase (335 aa).

ATP is bound at residue Gly-11. ADP is bound at residue 21–25; the sequence is RAVVR. ATP contacts are provided by residues 72-73 and 102-105; these read RY and GDGS. Asp-103 contributes to the Mg(2+) binding site. A substrate-binding site is contributed by 125-127; the sequence is TID. Asp-127 (proton acceptor) is an active-site residue. Position 154 (Arg-154) interacts with ADP. Residues Arg-162 and 169–171 contribute to the substrate site; that span reads MGR. Residues 185-187 and 213-215 each bind ADP; these read GAD and KKH. Residues Glu-222, Arg-244, and 250-253 contribute to the substrate site; that span reads HIQR.

This sequence belongs to the phosphofructokinase type A (PFKA) family. ATP-dependent PFK group I subfamily. Prokaryotic clade 'B1' sub-subfamily. As to quaternary structure, homotetramer. Mg(2+) serves as cofactor.

The protein resides in the cytoplasm. The enzyme catalyses beta-D-fructose 6-phosphate + ATP = beta-D-fructose 1,6-bisphosphate + ADP + H(+). It functions in the pathway carbohydrate degradation; glycolysis; D-glyceraldehyde 3-phosphate and glycerone phosphate from D-glucose: step 3/4. Its activity is regulated as follows. Allosterically activated by ADP and other diphosphonucleosides, and allosterically inhibited by phosphoenolpyruvate. In terms of biological role, catalyzes the phosphorylation of D-fructose 6-phosphate to fructose 1,6-bisphosphate by ATP, the first committing step of glycolysis. The chain is ATP-dependent 6-phosphofructokinase from Streptococcus pneumoniae (strain ATCC BAA-255 / R6).